The chain runs to 1052 residues: Kinesin-like protein KIF11 (1052 aa).

The Kinesin motor domain maps to 17–358 (NIQVVVRCRP…LEYAHRAKNI (342 aa)). An ATP-binding site is contributed by 104-111 (GQTGTGKT). Lys145 is modified (N6-acetyllysine). A coiled-coil region spans residues 364–478 (VNQKLTKKAL…ETKLQLVKEE (115 aa)). Phosphothreonine is present on Thr457. Lys476 participates in a covalent cross-link: Glycyl lysine isopeptide (Lys-Gly) (interchain with G-Cter in SUMO2). Thr925 carries the post-translational modification Phosphothreonine. 2 disordered regions span residues 950–1026 (LQKK…LNPV) and 1033–1052 (EASD…SINL). Positions 963-988 (EASKETSQDMDEEREALEQCTEELVS) form a coiled coil. A compositionally biased stretch (basic and acidic residues) spans 1016 to 1026 (KDKENRGLNPV).

The protein belongs to the TRAFAC class myosin-kinesin ATPase superfamily. Kinesin family. BimC subfamily. Interacts with the thyroid hormone receptor in the presence of thyroid hormone. Component of a large chromatin remodeling complex, at least composed of MYSM1, PCAF, RBM10 and KIF11/TRIP5. Interacts with RARRES1 and AGBL2. Post-translationally, phosphorylated exclusively on serine during S phase, but on both serine and Thr-925 during mitosis, so controlling the association of KIF11 with the spindle apparatus (probably during early prophase).

The protein localises to the cytoplasm. The protein resides in the cytoskeleton. It is found in the spindle pole. Its function is as follows. Motor protein required for establishing a bipolar spindle during mitosis. Required in non-mitotic cells for transport of secretory proteins from the Golgi complex to the cell surface. The protein is Kinesin-like protein KIF11 (Kif11) of Mus musculus (Mouse).